The chain runs to 410 residues: Probable ATP-dependent RNA helicase MG308 (410 aa).

In terms of domain architecture, Helicase ATP-binding spans Val-26 to Ile-179. Residue Ala-39–Thr-46 coordinates ATP. The DEID box signature appears at Asp-126–Asp-129. One can recognise a Helicase C-terminal domain in the interval Leu-190–Gln-357.

Belongs to the DEAD box helicase family.

The enzyme catalyses ATP + H2O = ADP + phosphate + H(+). The chain is Probable ATP-dependent RNA helicase MG308 from Mycoplasma genitalium (strain ATCC 33530 / DSM 19775 / NCTC 10195 / G37) (Mycoplasmoides genitalium).